The sequence spans 177 residues: GTP-dependent dephospho-CoA kinase (177 aa).

Residues D48, V49, V50, D67, K69, and E124 each contribute to the GTP site.

It belongs to the GTP-dependent DPCK family.

It carries out the reaction 3'-dephospho-CoA + GTP = GDP + CoA + H(+). It functions in the pathway cofactor biosynthesis; coenzyme A biosynthesis. In terms of biological role, catalyzes the GTP-dependent phosphorylation of the 3'-hydroxyl group of dephosphocoenzyme A to form coenzyme A (CoA). The sequence is that of GTP-dependent dephospho-CoA kinase from Pyrococcus furiosus (strain ATCC 43587 / DSM 3638 / JCM 8422 / Vc1).